A 424-amino-acid chain; its full sequence is Gamma-glutamyl phosphate reductase (424 aa).

The protein belongs to the gamma-glutamyl phosphate reductase family.

It localises to the cytoplasm. The enzyme catalyses L-glutamate 5-semialdehyde + phosphate + NADP(+) = L-glutamyl 5-phosphate + NADPH + H(+). It participates in amino-acid biosynthesis; L-proline biosynthesis; L-glutamate 5-semialdehyde from L-glutamate: step 2/2. Its function is as follows. Catalyzes the NADPH-dependent reduction of L-glutamate 5-phosphate into L-glutamate 5-semialdehyde and phosphate. The product spontaneously undergoes cyclization to form 1-pyrroline-5-carboxylate. This is Gamma-glutamyl phosphate reductase from Dehalococcoides mccartyi (strain ATCC BAA-2266 / KCTC 15142 / 195) (Dehalococcoides ethenogenes (strain 195)).